We begin with the raw amino-acid sequence, 453 residues long: Dihydrolipoyllysine-residue succinyltransferase component of 2-oxoglutarate dehydrogenase complex, mitochondrial (453 aa).

Residues 1-67 (MLSRSRCVSR…RFFRTTAVCK (67 aa)) constitute a mitochondrion transit peptide. The 75-residue stretch at 70-144 (LVTVKTPAFA…EGGTPLFTLR (75 aa)) folds into the Lipoyl-binding domain. Position 81 is a phosphoserine (serine 81). N6-lipoyllysine is present on lysine 110. Low complexity predominate over residues 152 to 172 (KAKPAEAPAAAAPKAEPTAAA). A disordered region spans residues 152–225 (KAKPAEAPAA…GKGLRSEHRE (74 aa)). N6-acetyllysine is present on lysine 154. Pro residues predominate over residues 173-196 (VPPPAAPIPTQMPPVPSPSQPPSG). N6-acetyllysine occurs at positions 267, 272, 273, 277, and 307. Residues histidine 424 and aspartate 428 contribute to the active site.

This sequence belongs to the 2-oxoacid dehydrogenase family. The 2-oxoglutarate dehydrogenase complex is composed of OGDH (2-oxoglutarate dehydrogenase; E1), DLST (dihydrolipoamide succinyltransferase; E2), DLD (dihydrolipoamide dehydrogenase; E3) and the assembly factor KGD4. It contains multiple copies of the three enzymatic components (E1, E2 and E3). In the nucleus, the 2-oxoglutarate dehydrogenase complex associates with KAT2A. Interacts with ABHD11; this interaction maintains the functional lipoylation of the 2-oxoglutarate dehydrogenase complex. The cofactor is (R)-lipoate.

The protein resides in the mitochondrion matrix. Its subcellular location is the nucleus. The catalysed reaction is N(6)-[(R)-dihydrolipoyl]-L-lysyl-[protein] + succinyl-CoA = N(6)-[(R)-S(8)-succinyldihydrolipoyl]-L-lysyl-[protein] + CoA. Its pathway is amino-acid degradation; L-lysine degradation via saccharopine pathway; glutaryl-CoA from L-lysine: step 6/6. The protein operates within carbohydrate metabolism; tricarboxylic acid cycle. Dihydrolipoamide succinyltransferase (E2) component of the 2-oxoglutarate dehydrogenase complex. The 2-oxoglutarate dehydrogenase complex catalyzes the overall conversion of 2-oxoglutarate to succinyl-CoA and CO(2). The 2-oxoglutarate dehydrogenase complex is mainly active in the mitochondrion. A fraction of the 2-oxoglutarate dehydrogenase complex also localizes in the nucleus and is required for lysine succinylation of histones: associates with KAT2A on chromatin and provides succinyl-CoA to histone succinyltransferase KAT2A. This Homo sapiens (Human) protein is Dihydrolipoyllysine-residue succinyltransferase component of 2-oxoglutarate dehydrogenase complex, mitochondrial.